The sequence spans 291 residues: N-acetylmannosamine kinase (291 aa).

Residues 5–12 (AIDIGGTK) and 132–139 (GVGGGVVC) contribute to the ATP site. His-156, Cys-166, Cys-168, and Cys-173 together coordinate Zn(2+).

The protein belongs to the ROK (NagC/XylR) family. NanK subfamily. Homodimer.

The enzyme catalyses an N-acyl-D-mannosamine + ATP = an N-acyl-D-mannosamine 6-phosphate + ADP + H(+). Its pathway is amino-sugar metabolism; N-acetylneuraminate degradation; D-fructose 6-phosphate from N-acetylneuraminate: step 2/5. Functionally, catalyzes the phosphorylation of N-acetylmannosamine (ManNAc) to ManNAc-6-P. In Salmonella heidelberg (strain SL476), this protein is N-acetylmannosamine kinase.